Consider the following 418-residue polypeptide: Probable carboxypeptidase AO090166000075 (418 aa).

A signal peptide spans Met1–Ala18. N-linked (GlcNAc...) asparagine glycosylation is present at Asn74. Asp147 is a binding site for Zn(2+). Asn168 carries an N-linked (GlcNAc...) asparagine glycan. The Proton acceptor role is filled by Glu179. Residue Glu180 participates in Zn(2+) binding.

It belongs to the peptidase M20A family. Requires Zn(2+) as cofactor.

The protein localises to the secreted. The sequence is that of Probable carboxypeptidase AO090166000075 from Aspergillus oryzae (strain ATCC 42149 / RIB 40) (Yellow koji mold).